The following is a 165-amino-acid chain: 2-C-methyl-D-erythritol 2,4-cyclodiphosphate synthase (165 aa).

2 residues coordinate a divalent metal cation: aspartate 12 and histidine 14. 4-CDP-2-C-methyl-D-erythritol 2-phosphate-binding positions include 12–14 (DVH) and 38–39 (HS). Residue histidine 46 participates in a divalent metal cation binding. Residues 60-62 (DIG), 65-69 (FPDTD), phenylalanine 143, and arginine 146 contribute to the 4-CDP-2-C-methyl-D-erythritol 2-phosphate site.

Belongs to the IspF family. In terms of assembly, homotrimer. It depends on a divalent metal cation as a cofactor.

It carries out the reaction 4-CDP-2-C-methyl-D-erythritol 2-phosphate = 2-C-methyl-D-erythritol 2,4-cyclic diphosphate + CMP. The protein operates within isoprenoid biosynthesis; isopentenyl diphosphate biosynthesis via DXP pathway; isopentenyl diphosphate from 1-deoxy-D-xylulose 5-phosphate: step 4/6. Functionally, involved in the biosynthesis of isopentenyl diphosphate (IPP) and dimethylallyl diphosphate (DMAPP), two major building blocks of isoprenoid compounds. Catalyzes the conversion of 4-diphosphocytidyl-2-C-methyl-D-erythritol 2-phosphate (CDP-ME2P) to 2-C-methyl-D-erythritol 2,4-cyclodiphosphate (ME-CPP) with a corresponding release of cytidine 5-monophosphate (CMP). This Aromatoleum aromaticum (strain DSM 19018 / LMG 30748 / EbN1) (Azoarcus sp. (strain EbN1)) protein is 2-C-methyl-D-erythritol 2,4-cyclodiphosphate synthase.